The primary structure comprises 246 residues: DNA repair protein RecO (246 aa).

It belongs to the RecO family.

Involved in DNA repair and RecF pathway recombination. This is DNA repair protein RecO from Methylorubrum extorquens (strain CM4 / NCIMB 13688) (Methylobacterium extorquens).